A 291-amino-acid chain; its full sequence is tRNA dimethylallyltransferase (291 aa).

Residue 8–15 coordinates ATP; the sequence is GSTASGKT. 10–15 lines the substrate pocket; the sequence is TASGKT. The interaction with substrate tRNA stretch occupies residues 33–36; sequence DSLC.

The protein belongs to the IPP transferase family. In terms of assembly, monomer. Mg(2+) is required as a cofactor.

It catalyses the reaction adenosine(37) in tRNA + dimethylallyl diphosphate = N(6)-dimethylallyladenosine(37) in tRNA + diphosphate. In terms of biological role, catalyzes the transfer of a dimethylallyl group onto the adenine at position 37 in tRNAs that read codons beginning with uridine, leading to the formation of N6-(dimethylallyl)adenosine (i(6)A). The polypeptide is tRNA dimethylallyltransferase (Aliarcobacter butzleri (strain RM4018) (Arcobacter butzleri)).